A 363-amino-acid chain; its full sequence is GDSL esterase/lipase At2g24560 (363 aa).

Residues 1–22 (MSTSKTITFTLFIAALLSSCDA) form the signal peptide. Asn25 carries N-linked (GlcNAc...) asparagine glycosylation. Residue Ser41 is the Nucleophile of the active site. N-linked (GlcNAc...) asparagine glycosylation is found at Asn103 and Asn325. Residues Asp333 and His336 contribute to the active site.

Belongs to the 'GDSL' lipolytic enzyme family.

It is found in the secreted. This chain is GDSL esterase/lipase At2g24560, found in Arabidopsis thaliana (Mouse-ear cress).